Consider the following 476-residue polypeptide: 2-(3-amino-3-carboxypropyl)histidine synthase subunit 2 (476 aa).

The span at 1-15 shows a compositional bias: polar residues; it reads MTESAPSAFFTTSTP. The segment at 1–24 is disordered; the sequence is MTESAPSAFFTTSTPADHVHEEES. [4Fe-4S] cluster-binding residues include cysteine 102, cysteine 123, and cysteine 347. The tract at residues 451–476 is disordered; the sequence is DGVSTAEDSTKMGEGRSGIAQGYSGK.

This sequence belongs to the DPH1/DPH2 family. DPH2 subfamily. Component of the 2-(3-amino-3-carboxypropyl)histidine synthase complex composed of dph-1, dph-2, dph-3 and a NADH-dependent reductase. [4Fe-4S] cluster is required as a cofactor.

It functions in the pathway protein modification; peptidyl-diphthamide biosynthesis. Required for the first step of diphthamide biosynthesis, a post-translational modification of histidine which occurs in elongation factor 2. Dph-1 and dph-2 transfer a 3-amino-3-carboxypropyl (ACP) group from S-adenosyl-L-methionine (SAM) to a histidine residue, the reaction is assisted by a reduction system comprising dph-3 and a NADH-dependent reductase. Facilitates the reduction of the catalytic iron-sulfur cluster found in the dph-1 subunit. This Caenorhabditis elegans protein is 2-(3-amino-3-carboxypropyl)histidine synthase subunit 2 (dph-2).